The primary structure comprises 205 residues: Small ribosomal subunit protein uS2 (205 aa).

The protein belongs to the universal ribosomal protein uS2 family.

The sequence is that of Small ribosomal subunit protein uS2 (rps2) from Aeropyrum pernix (strain ATCC 700893 / DSM 11879 / JCM 9820 / NBRC 100138 / K1).